The sequence spans 176 residues: Ribosome rescue factor SmrB (176 aa).

The 76-residue stretch at 93–168 (LDLHGYRQSE…GDAALLVLID (76 aa)) folds into the Smr domain.

This sequence belongs to the SmrB family. Associates with collided ribosomes, but not with correctly translating polysomes.

Its function is as follows. Acts as a ribosome collision sensor. Detects stalled/collided disomes (pairs of ribosomes where the leading ribosome is stalled and a second ribosome has collided with it) and endonucleolytically cleaves mRNA at the 5' boundary of the stalled ribosome. Stalled/collided disomes form a new interface (primarily via the 30S subunits) that binds SmrB. Cleaved mRNA becomes available for tmRNA ligation, leading to ribosomal subunit dissociation and rescue of stalled ribosomes. In Shewanella sp. (strain ANA-3), this protein is Ribosome rescue factor SmrB.